A 467-amino-acid polypeptide reads, in one-letter code: Nuclear distribution protein PAC1 (467 aa).

Residues Gly-62–Val-96 adopt a coiled-coil conformation. 7 WD repeats span residues Gln-121 to Ala-160, Ala-164 to Lys-212, Ala-219 to Ser-262, His-264 to Thr-302, Pro-325 to Asn-365, Gly-385 to Ser-424, and Ile-426 to Ile-466.

Belongs to the WD repeat LIS1/nudF family. In terms of assembly, self-associates. Interacts with NDL1 and dynein.

The protein resides in the cytoplasm. The protein localises to the cytoskeleton. It is found in the spindle pole. Its function is as follows. Positively regulates the activity of the minus-end directed microtubule motor protein dynein. Plays a central role in positioning the mitotic spindle at the bud neck during cell division. Targets cytoplasmic dynein to microtubule plus ends, thereby promoting dynein-mediated microtubule sliding along the bud cortex and consequently the movement of the mitotic spindle to the bud neck. In Candida glabrata (strain ATCC 2001 / BCRC 20586 / JCM 3761 / NBRC 0622 / NRRL Y-65 / CBS 138) (Yeast), this protein is Nuclear distribution protein PAC1.